Reading from the N-terminus, the 229-residue chain is Uracil-DNA glycosylase (229 aa).

D65 acts as the Proton acceptor in catalysis.

It belongs to the uracil-DNA glycosylase (UDG) superfamily. UNG family.

It is found in the cytoplasm. The catalysed reaction is Hydrolyzes single-stranded DNA or mismatched double-stranded DNA and polynucleotides, releasing free uracil.. Its function is as follows. Excises uracil residues from the DNA which can arise as a result of misincorporation of dUMP residues by DNA polymerase or due to deamination of cytosine. This Brevibacillus brevis (strain 47 / JCM 6285 / NBRC 100599) protein is Uracil-DNA glycosylase.